A 388-amino-acid polypeptide reads, in one-letter code: Succinyl-diaminopimelate desuccinylase (388 aa).

His75 is a Zn(2+) binding site. The active site involves Asp77. Zn(2+) is bound at residue Asp108. Residue Glu142 is the Proton acceptor of the active site. 3 residues coordinate Zn(2+): Glu143, Glu171, and His361.

It belongs to the peptidase M20A family. DapE subfamily. Homodimer. Zn(2+) is required as a cofactor. Requires Co(2+) as cofactor.

The catalysed reaction is N-succinyl-(2S,6S)-2,6-diaminopimelate + H2O = (2S,6S)-2,6-diaminopimelate + succinate. The protein operates within amino-acid biosynthesis; L-lysine biosynthesis via DAP pathway; LL-2,6-diaminopimelate from (S)-tetrahydrodipicolinate (succinylase route): step 3/3. Functionally, catalyzes the hydrolysis of N-succinyl-L,L-diaminopimelic acid (SDAP), forming succinate and LL-2,6-diaminopimelate (DAP), an intermediate involved in the bacterial biosynthesis of lysine and meso-diaminopimelic acid, an essential component of bacterial cell walls. The sequence is that of Succinyl-diaminopimelate desuccinylase from Methylocella silvestris (strain DSM 15510 / CIP 108128 / LMG 27833 / NCIMB 13906 / BL2).